A 239-amino-acid chain; its full sequence is LexA repressor (239 aa).

The segment at residues 26 to 46 (FDEMKDALDLASKSGIHRLIT) is a DNA-binding region (H-T-H motif). Catalysis depends on for autocatalytic cleavage activity residues Ser159 and Lys197.

It belongs to the peptidase S24 family. As to quaternary structure, homodimer.

It catalyses the reaction Hydrolysis of Ala-|-Gly bond in repressor LexA.. In terms of biological role, represses a number of genes involved in the response to DNA damage (SOS response), including recA and lexA. In the presence of single-stranded DNA, RecA interacts with LexA causing an autocatalytic cleavage which disrupts the DNA-binding part of LexA, leading to derepression of the SOS regulon and eventually DNA repair. The polypeptide is LexA repressor (Allorhizobium ampelinum (strain ATCC BAA-846 / DSM 112012 / S4) (Agrobacterium vitis (strain S4))).